Here is a 152-residue protein sequence, read N- to C-terminus: Deoxyuridine 5'-triphosphate nucleotidohydrolase (152 aa).

Substrate-binding positions include 72 to 74 (RSG), Asn-85, and 89 to 91 (TID).

The protein belongs to the dUTPase family. It depends on Mg(2+) as a cofactor.

The catalysed reaction is dUTP + H2O = dUMP + diphosphate + H(+). It participates in pyrimidine metabolism; dUMP biosynthesis; dUMP from dCTP (dUTP route): step 2/2. In terms of biological role, this enzyme is involved in nucleotide metabolism: it produces dUMP, the immediate precursor of thymidine nucleotides and it decreases the intracellular concentration of dUTP so that uracil cannot be incorporated into DNA. The chain is Deoxyuridine 5'-triphosphate nucleotidohydrolase from Rhodopseudomonas palustris (strain BisB18).